Reading from the N-terminus, the 130-residue chain is Small ribosomal subunit protein uS9 (130 aa).

Residues Lys111–Arg130 are disordered.

It belongs to the universal ribosomal protein uS9 family.

The chain is Small ribosomal subunit protein uS9 from Thermoanaerobacter sp. (strain X514).